A 123-amino-acid chain; its full sequence is Large ribosomal subunit protein eL8 (123 aa).

This sequence belongs to the eukaryotic ribosomal protein eL8 family. In terms of assembly, part of the 50S ribosomal subunit. Probably part of the RNase P complex.

The protein resides in the cytoplasm. In terms of biological role, multifunctional RNA-binding protein that recognizes the K-turn motif in ribosomal RNA, the RNA component of RNase P, box H/ACA, box C/D and box C'/D' sRNAs. The polypeptide is Large ribosomal subunit protein eL8 (Pyrococcus abyssi (strain GE5 / Orsay)).